Here is a 327-residue protein sequence, read N- to C-terminus: Lipoyl synthase (327 aa).

Cysteine 66, cysteine 71, cysteine 77, cysteine 92, cysteine 96, cysteine 99, and serine 306 together coordinate [4Fe-4S] cluster. One can recognise a Radical SAM core domain in the interval 78-295 (FSKGTATFMI…EKEAYELGFS (218 aa)).

The protein belongs to the radical SAM superfamily. Lipoyl synthase family. [4Fe-4S] cluster serves as cofactor.

The protein localises to the cytoplasm. It catalyses the reaction [[Fe-S] cluster scaffold protein carrying a second [4Fe-4S](2+) cluster] + N(6)-octanoyl-L-lysyl-[protein] + 2 oxidized [2Fe-2S]-[ferredoxin] + 2 S-adenosyl-L-methionine + 4 H(+) = [[Fe-S] cluster scaffold protein] + N(6)-[(R)-dihydrolipoyl]-L-lysyl-[protein] + 4 Fe(3+) + 2 hydrogen sulfide + 2 5'-deoxyadenosine + 2 L-methionine + 2 reduced [2Fe-2S]-[ferredoxin]. Its pathway is protein modification; protein lipoylation via endogenous pathway; protein N(6)-(lipoyl)lysine from octanoyl-[acyl-carrier-protein]: step 2/2. Its function is as follows. Catalyzes the radical-mediated insertion of two sulfur atoms into the C-6 and C-8 positions of the octanoyl moiety bound to the lipoyl domains of lipoate-dependent enzymes, thereby converting the octanoylated domains into lipoylated derivatives. This is Lipoyl synthase from Neisseria meningitidis serogroup A / serotype 4A (strain DSM 15465 / Z2491).